A 182-amino-acid chain; its full sequence is ATP-dependent protease subunit HslV (182 aa).

Thr12 is a catalytic residue. Positions 167, 170, and 173 each coordinate Na(+).

Belongs to the peptidase T1B family. HslV subfamily. A double ring-shaped homohexamer of HslV is capped on each side by a ring-shaped HslU homohexamer. The assembly of the HslU/HslV complex is dependent on binding of ATP.

It is found in the cytoplasm. It catalyses the reaction ATP-dependent cleavage of peptide bonds with broad specificity.. Its activity is regulated as follows. Allosterically activated by HslU binding. In terms of biological role, protease subunit of a proteasome-like degradation complex believed to be a general protein degrading machinery. This chain is ATP-dependent protease subunit HslV, found in Chlorobium luteolum (strain DSM 273 / BCRC 81028 / 2530) (Pelodictyon luteolum).